A 340-amino-acid polypeptide reads, in one-letter code: Phospho-N-acetylmuramoyl-pentapeptide-transferase (340 aa).

The next 9 membrane-spanning stretches (helical) occupy residues 22-42 (VVVP…LLIP), 69-89 (TMGG…WSGW), 95-115 (AVAL…WLVI), 129-149 (LLLQ…QGIP), 156-176 (GIGT…VLVG), 186-206 (GMDG…GLLH), 209-229 (PELS…LVHN), 235-257 (LFMG…LLGD), and 316-336 (VVGS…AWWH).

The protein belongs to the glycosyltransferase 4 family. MraY subfamily. It depends on Mg(2+) as a cofactor.

The protein resides in the cell inner membrane. It carries out the reaction UDP-N-acetyl-alpha-D-muramoyl-L-alanyl-gamma-D-glutamyl-meso-2,6-diaminopimeloyl-D-alanyl-D-alanine + di-trans,octa-cis-undecaprenyl phosphate = di-trans,octa-cis-undecaprenyl diphospho-N-acetyl-alpha-D-muramoyl-L-alanyl-D-glutamyl-meso-2,6-diaminopimeloyl-D-alanyl-D-alanine + UMP. Its pathway is cell wall biogenesis; peptidoglycan biosynthesis. Functionally, catalyzes the initial step of the lipid cycle reactions in the biosynthesis of the cell wall peptidoglycan: transfers peptidoglycan precursor phospho-MurNAc-pentapeptide from UDP-MurNAc-pentapeptide onto the lipid carrier undecaprenyl phosphate, yielding undecaprenyl-pyrophosphoryl-MurNAc-pentapeptide, known as lipid I. In Synechococcus sp. (strain JA-2-3B'a(2-13)) (Cyanobacteria bacterium Yellowstone B-Prime), this protein is Phospho-N-acetylmuramoyl-pentapeptide-transferase.